The chain runs to 66 residues: Putative transmembrane protein ORF66 (66 aa).

Over 1–6 (MSDVDD) the chain is Cytoplasmic. The chain crosses the membrane as a helical span at residues 7 to 27 (TIVDSIAIVGAILIGIFLIVV). The Extracellular portion of the chain corresponds to 28 to 39 (SVSNTSLFNNTE). Residues 40 to 60 (YDSMINSVLVIISSVIAYTLG) traverse the membrane as a helical segment. The Cytoplasmic segment spans residues 61 to 66 (KRRSKS).

It is found in the host membrane. The chain is Putative transmembrane protein ORF66 from Acidianus filamentous virus 2 (isolate Italy/Pozzuoli) (AFV-2).